The following is an 837-amino-acid chain: Tuftelin-interacting protein 11 (837 aa).

2 stretches are compositionally biased toward basic and acidic residues: residues 1 to 13 (MSLSHLYRDGEGR) and 53 to 64 (VWAERDSDDERP). Disordered regions lie at residues 1 to 21 (MSLSHLYRDGEGRIDDDDDER), 53 to 72 (VWAERDSDDERPSFGGKRAR), and 85 to 133 (LKKG…KGFA). Phosphoserine is present on residues S2, S59, and S98. The segment covering 91–102 (EEAELEDSDDEE) has biased composition (acidic residues). Residues 103–116 (RPVKQDDFPKDFGP) are compositionally biased toward basic and acidic residues. S144 carries the post-translational modification Phosphoserine. A G-patch domain is found at 149 to 195 (TKGIGQKLLQKMGYVPGRGLGKNAQGIINPIEAKQRKGKGAVGAYGS). Residues 179-236 (IEAKQRKGKGAVGAYGSERTTQSMQDFPVVDSEEEAEEEFQKGLSQWRKDPSGSKKKP) form a disordered region. Phosphoserine is present on S210. Residues 700-705 (VKDKFN) carry the Nuclear localization signal motif. Positions 710 to 734 (IMNRAVSSNVGAYMQPGARENIAYL) are required for nuclear speckle localization.

Belongs to the TFP11/STIP family. Identified in the spliceosome C complex. Found in the Intron Large (IL) complex, a post-mRNA release spliceosomal complex containing the excised intron, U2, U5 and U6 snRNPs, and splicing factors. Interacts with TUFT1. Interacts with DHX15; indicative for a recruitment of DHX15 to the IL complex. Interacts with GCFC2.

The protein resides in the cytoplasm. The protein localises to the nucleus. In terms of biological role, involved in pre-mRNA splicing, specifically in spliceosome disassembly during late-stage splicing events. Intron turnover seems to proceed through reactions in two lariat-intron associated complexes termed Intron Large (IL) and Intron Small (IS). In cooperation with DHX15 seems to mediate the transition of the U2, U5 and U6 snRNP-containing IL complex to the snRNP-free IS complex leading to efficient debranching and turnover of excised introns. May play a role in the differentiation of ameloblasts and odontoblasts or in the forming of the enamel extracellular matrix. The protein is Tuftelin-interacting protein 11 (TFIP11) of Macaca fascicularis (Crab-eating macaque).